Consider the following 394-residue polypeptide: QWRF motif-containing protein 7 (394 aa).

The segment at 1–171 (MATTGRRLRP…ESPVSKAKIR (171 aa)) is disordered. A compositionally biased stretch (low complexity) spans 14–67 (NNNRSRTISSSISLPVSLNASLSSSTSSSSSSSPSNSSKRVMITRSQSTTRSSR). The segment covering 85-96 (NSASRSQEINNG) has biased composition (polar residues). The span at 97 to 110 (RSRESFARYLEQRT) shows a compositional bias: basic and acidic residues. Composition is skewed to polar residues over residues 111 to 120 (RGSPRSNASS) and 142 to 157 (TMKTPLSSSAPTTSMC). A QWRF motif motif is present at residues 211–214 (QWRF).

This sequence belongs to the QWRF family.

The protein is QWRF motif-containing protein 7 (QWRF7) of Arabidopsis thaliana (Mouse-ear cress).